Reading from the N-terminus, the 838-residue chain is Protein translocase subunit SecA (838 aa).

ATP contacts are provided by residues Gln87, 105–109 (GEGKT), and Asp494. Composition is skewed to basic and acidic residues over residues 781 to 790 (EQEFQHKDET) and 803 to 819 (EDAK…KVGR). Residues 781–838 (EQEFQHKDETANVQYSGPAESAEDAKKEPKRREAPKVGRNDPCPCGSGKKYKKCHGAK) form a disordered region. Zn(2+)-binding residues include Cys823, Cys825, Cys834, and His835. Residues 829–838 (KKYKKCHGAK) show a composition bias toward basic residues.

Belongs to the SecA family. As to quaternary structure, monomer and homodimer. Part of the essential Sec protein translocation apparatus which comprises SecA, SecYEG and auxiliary proteins SecDF-YajC and YidC. Zn(2+) serves as cofactor.

It localises to the cell inner membrane. It is found in the cytoplasm. It catalyses the reaction ATP + H2O + cellular proteinSide 1 = ADP + phosphate + cellular proteinSide 2.. Part of the Sec protein translocase complex. Interacts with the SecYEG preprotein conducting channel. Has a central role in coupling the hydrolysis of ATP to the transfer of proteins into and across the cell membrane, serving as an ATP-driven molecular motor driving the stepwise translocation of polypeptide chains across the membrane. The chain is Protein translocase subunit SecA from Solidesulfovibrio magneticus (strain ATCC 700980 / DSM 13731 / RS-1) (Desulfovibrio magneticus).